An 808-amino-acid polypeptide reads, in one-letter code: DNA gyrase subunit B (808 aa).

The region spanning 429 to 544 is the Toprim domain; the sequence is SELFIVEGDS…KGYLYIAQPP (116 aa). 3 residues coordinate Mg(2+): glutamate 435, aspartate 509, and aspartate 511.

The protein belongs to the type II topoisomerase GyrB family. Heterotetramer, composed of two GyrA and two GyrB chains. In the heterotetramer, GyrA contains the active site tyrosine that forms a transient covalent intermediate with DNA, while GyrB binds cofactors and catalyzes ATP hydrolysis. Mg(2+) serves as cofactor. It depends on Mn(2+) as a cofactor. The cofactor is Ca(2+).

It localises to the cytoplasm. The catalysed reaction is ATP-dependent breakage, passage and rejoining of double-stranded DNA.. Its function is as follows. A type II topoisomerase that negatively supercoils closed circular double-stranded (ds) DNA in an ATP-dependent manner to modulate DNA topology and maintain chromosomes in an underwound state. Negative supercoiling favors strand separation, and DNA replication, transcription, recombination and repair, all of which involve strand separation. Also able to catalyze the interconversion of other topological isomers of dsDNA rings, including catenanes and knotted rings. Type II topoisomerases break and join 2 DNA strands simultaneously in an ATP-dependent manner. The polypeptide is DNA gyrase subunit B (Rickettsia felis (strain ATCC VR-1525 / URRWXCal2) (Rickettsia azadi)).